The chain runs to 195 residues: MAFVLSLLMALVLVSYGPGRSLGCYLSEDHMLGARENLRLLARMNRLSPHPCLQDRKDFGLPQEMVEGNQLQKDQAISVLHEMLQQCFNLFYTEHSSAAWNTTLLEQLCTGLQQQLEDLDACLGPVMGEKDSDMGRMGPILTVKKYFQGIHVYLKEKEYSDCAWEIIRVEMMRALSSSTTLQKRLRKMGGDLNSL.

The first 23 residues, methionine 1–glycine 23, serve as a signal peptide directing secretion. 2 disulfides stabilise this stretch: cysteine 24–cysteine 122 and cysteine 52–cysteine 162. Asparagine 101 carries an N-linked (GlcNAc...) asparagine glycan.

Belongs to the alpha/beta interferon family. IFN-alphaII subfamily. In terms of tissue distribution, constitutively and exclusively expressed in the mononuclear cells of the extraembryonic trophectoderm.

The protein resides in the secreted. In terms of biological role, paracrine hormone primarily responsible for maternal recognition of pregnancy. Interacts with endometrial receptors, probably type I interferon receptors, and blocks estrogen receptor expression, preventing the estrogen-induced increase in oxytocin receptor expression in the endometrium. This results in the suppression of the pulsatile endometrial release of the luteolytic hormone prostaglandin F2-alpha, hindering the regression of the corpus luteum (luteolysis) and therefore a return to ovarian cyclicity. This, and a possible direct effect of IFN-tau on prostaglandin synthesis, leads in turn to continued ovarian progesterone secretion, which stimulates the secretion by the endometrium of the nutrients required for the growth of the conceptus. In summary, displays particularly high antiviral and antiproliferative potency concurrently with particular weak cytotoxicity, high antiluteolytic activity and immunomodulatory properties. In contrast with other IFNs, IFN-tau is not virally inducible. In Bos taurus (Bovine), this protein is Interferon tau-1 (IFNT1).